Here is a 402-residue protein sequence, read N- to C-terminus: Sulfate adenylyltransferase (402 aa).

This sequence belongs to the sulfate adenylyltransferase family.

It catalyses the reaction sulfate + ATP + H(+) = adenosine 5'-phosphosulfate + diphosphate. It participates in sulfur metabolism; hydrogen sulfide biosynthesis; sulfite from sulfate: step 1/3. The protein is Sulfate adenylyltransferase of Ruthia magnifica subsp. Calyptogena magnifica.